The following is a 230-amino-acid chain: D-glycero-alpha-D-manno-heptose 1-phosphate guanylyltransferase (230 aa).

The protein belongs to the D-alpha-D-heptose-1-P guanylyltransferase family.

The enzyme catalyses D-glycero-alpha-D-manno-heptose 1-phosphate + GTP + H(+) = GDP-D-glycero-alpha-D-manno-heptose + diphosphate. The protein operates within nucleotide-sugar biosynthesis; GDP-D-glycero-alpha-D-manno-heptose biosynthesis; GDP-D-glycero-alpha-D-manno-heptose from D-glycero-alpha-D-manno-heptose 7-phosphate: step 3/3. It functions in the pathway cell surface structure biogenesis; S-layer biogenesis. In terms of biological role, catalyzes the GDP transfer from GTP to D-glycero-alpha-D-manno-heptose 1-phosphate, yielding GDP-D-alpha-D-heptose. Cannot use ATP, CTP, dTTP or UTP as substrate. The polypeptide is D-glycero-alpha-D-manno-heptose 1-phosphate guanylyltransferase (hddC) (Aneurinibacillus thermoaerophilus).